The sequence spans 462 residues: 3-isopropylmalate dehydratase large subunit (462 aa).

Residues Cys-337, Cys-397, and Cys-400 each coordinate [4Fe-4S] cluster.

This sequence belongs to the aconitase/IPM isomerase family. LeuC type 1 subfamily. In terms of assembly, heterodimer of LeuC and LeuD. It depends on [4Fe-4S] cluster as a cofactor.

It carries out the reaction (2R,3S)-3-isopropylmalate = (2S)-2-isopropylmalate. Its pathway is amino-acid biosynthesis; L-leucine biosynthesis; L-leucine from 3-methyl-2-oxobutanoate: step 2/4. Functionally, catalyzes the isomerization between 2-isopropylmalate and 3-isopropylmalate, via the formation of 2-isopropylmaleate. This Listeria welshimeri serovar 6b (strain ATCC 35897 / DSM 20650 / CCUG 15529 / CIP 8149 / NCTC 11857 / SLCC 5334 / V8) protein is 3-isopropylmalate dehydratase large subunit.